The sequence spans 1081 residues: Mediator of RNA polymerase II transcription subunit 15 (1081 aa).

Ser2 bears the N-acetylserine mark. The segment at 25-49 (LQVLMDINTLNGGSSDTADKIRIHA) is interaction with GCN4. The interval 238–286 (QAQAQANNNNNGLPQNGNINNNINIPQQQQMQPPNSSANNNPLQQQSSQ) is disordered. The residue at position 335 (Ser335) is a Phosphoserine. Repeat copies occupy residues 422–423 (QA), 424–425 (QA), 426–427 (QA), 428–429 (QA), 430–431 (QA), 432–433 (QA), 434–435 (QA), 436–437 (QA), 438–439 (QA), 440–441 (QA), and 442–443 (QA). The segment at 422-481 (QAQAQAQAQAQAQAQAQAQAQAAQAAQAQAQAQAQAQAQAQAQAQAQAQAQAQAQAQAQA) is 30 X 2 AA approximate tandem repeats of Q-A. The 12; approximate repeat unit spans residues 444–445 (AQ). The stretch at 446-447 (AA) is one 13; approximate repeat. 17 tandem repeats follow at residues 448–449 (QA), 450–451 (QA), 452–453 (QA), 454–455 (QA), 456–457 (QA), 458–459 (QA), 460–461 (QA), 462–463 (QA), 464–465 (QA), 466–467 (QA), 468–469 (QA), 470–471 (QA), 472–473 (QA), 474–475 (QA), 476–477 (QA), 478–479 (QA), and 480–481 (QA). Over residues 476 to 497 (QAQAQAHAQHQPSQQPQQAQQQ) the composition is skewed to low complexity. Disordered regions lie at residues 476–505 (QAQA…HGLT) and 692–712 (QQQQ…YSAM). 5 positions are modified to phosphoserine: Ser736, Ser752, Ser783, Ser785, and Ser789. A disordered region spans residues 744–836 (PVSAAATPSL…KTVQSPMGAQ (93 aa)). A compositionally biased stretch (polar residues) spans 749-836 (ATPSLNKTIN…KTVQSPMGAQ (88 aa)). A Phosphothreonine modification is found at Thr793. Residues Ser831, Ser1003, Ser1008, Ser1018, and Ser1034 each carry the phosphoserine modification. A disordered region spans residues 1026–1055 (DSKKIKVDSPDDPFMTKSGATTSEKQEVTN).

This sequence belongs to the Mediator complex subunit 15 family. In terms of assembly, component of the Mediator complex, which is composed of at least 21 subunits that form three structurally distinct submodules. The Mediator head module contains MED6, MED8, MED11, SRB4/MED17, SRB5/MED18, ROX3/MED19, SRB2/MED20 and SRB6/MED22, the middle module contains MED1, MED4, NUT1/MED5, MED7, CSE2/MED9, NUT2/MED10, SRB7/MED21 and SOH1/MED31, and the tail module contains MED2, PGD1/MED3, RGR1/MED14, GAL11/MED15 and SIN4/MED16. The head and the middle modules interact directly with RNA polymerase II, whereas the elongated tail module interacts with gene-specific regulatory proteins. GAL11/MED15 interacts with the activator GAL4; the interaction is direct. GAL11/MED15 interacts (via multiple regions) with the activator GCN4; the interaction is direct.

The protein localises to the nucleus. Functionally, component of the Mediator complex, a coactivator involved in the regulated transcription of nearly all RNA polymerase II-dependent genes. Mediator functions as a bridge to convey information from gene-specific regulatory proteins to the basal RNA polymerase II transcription machinery. The Mediator complex, having a compact conformation in its free form, is recruited to promoters by direct interactions with regulatory proteins and serves for the assembly of a functional pre-initiation complex with RNA polymerase II and the general transcription factors. The Mediator complex unfolds to an extended conformation and partially surrounds RNA polymerase II, specifically interacting with the unphosphorylated form of the C-terminal domain (CTD) of RNA polymerase II. The Mediator complex dissociates from the RNA polymerase II holoenzyme and stays at the promoter when transcriptional elongation begins. It has an important role in the negative regulation of Ty transcription. This is Mediator of RNA polymerase II transcription subunit 15 from Saccharomyces cerevisiae (strain ATCC 204508 / S288c) (Baker's yeast).